Here is a 467-residue protein sequence, read N- to C-terminus: A-type ATP synthase subunit B (467 aa).

The tract at residues 95–114 (GKGQPRDHMPLPPPEDFRDV) is disordered.

This sequence belongs to the ATPase alpha/beta chains family. Has multiple subunits with at least A(3), B(3), C, D, E, F, H, I and proteolipid K(x).

The protein localises to the cell membrane. In terms of biological role, component of the A-type ATP synthase that produces ATP from ADP in the presence of a proton gradient across the membrane. The B chain is a regulatory subunit. This chain is A-type ATP synthase subunit B, found in Pyrobaculum neutrophilum (strain DSM 2338 / JCM 9278 / NBRC 100436 / V24Sta) (Thermoproteus neutrophilus).